We begin with the raw amino-acid sequence, 399 residues long: Acetate kinase (399 aa).

Asn-7 contributes to the Mg(2+) binding site. Lys-14 contributes to the ATP binding site. Residue Arg-91 participates in substrate binding. Asp-148 acts as the Proton donor/acceptor in catalysis. ATP-binding positions include 208-212 (HLGNG), 283-285 (DFR), and 331-335 (GLGEN). Residue Glu-384 coordinates Mg(2+).

The protein belongs to the acetokinase family. In terms of assembly, homodimer. It depends on Mg(2+) as a cofactor. Requires Mn(2+) as cofactor.

It localises to the cytoplasm. It catalyses the reaction acetate + ATP = acetyl phosphate + ADP. It participates in metabolic intermediate biosynthesis; acetyl-CoA biosynthesis; acetyl-CoA from acetate: step 1/2. Functionally, catalyzes the formation of acetyl phosphate from acetate and ATP. Can also catalyze the reverse reaction. This chain is Acetate kinase, found in Desulfitobacterium hafniense (strain Y51).